The chain runs to 59 residues: UPF0434 protein PBPRA2383 (59 aa).

It belongs to the UPF0434 family.

The protein is UPF0434 protein PBPRA2383 of Photobacterium profundum (strain SS9).